Consider the following 53-residue polypeptide: Sec-independent protein translocase protein TatA (53 aa).

The chain crosses the membrane as a helical span at residues 1-21 (MGMSVSHLLIVLLIIFVLFGA).

Belongs to the TatA/E family. In terms of assembly, the Tat system comprises two distinct complexes: a TatABC complex, containing multiple copies of TatA, TatB and TatC subunits, and a separate TatA complex, containing only TatA subunits. Substrates initially bind to the TatABC complex, which probably triggers association of the separate TatA complex to form the active translocon.

It localises to the cell inner membrane. Functionally, part of the twin-arginine translocation (Tat) system that transports large folded proteins containing a characteristic twin-arginine motif in their signal peptide across membranes. TatA could form the protein-conducting channel of the Tat system. The chain is Sec-independent protein translocase protein TatA from Rickettsia massiliae (strain Mtu5).